Consider the following 180-residue polypeptide: NAD(P)H-quinone oxidoreductase subunit I, chloroplastic (180 aa).

4Fe-4S ferredoxin-type domains follow at residues 55–84 (GRIH…VDWR) and 95–124 (LNYS…MTEE). The [4Fe-4S] cluster site is built by C64, C67, C70, C74, C104, C107, C110, and C114.

Belongs to the complex I 23 kDa subunit family. As to quaternary structure, NDH is composed of at least 16 different subunits, 5 of which are encoded in the nucleus. The cofactor is [4Fe-4S] cluster.

The protein localises to the plastid. It is found in the chloroplast thylakoid membrane. The enzyme catalyses a plastoquinone + NADH + (n+1) H(+)(in) = a plastoquinol + NAD(+) + n H(+)(out). It catalyses the reaction a plastoquinone + NADPH + (n+1) H(+)(in) = a plastoquinol + NADP(+) + n H(+)(out). In terms of biological role, NDH shuttles electrons from NAD(P)H:plastoquinone, via FMN and iron-sulfur (Fe-S) centers, to quinones in the photosynthetic chain and possibly in a chloroplast respiratory chain. The immediate electron acceptor for the enzyme in this species is believed to be plastoquinone. Couples the redox reaction to proton translocation, and thus conserves the redox energy in a proton gradient. This Drimys granadensis protein is NAD(P)H-quinone oxidoreductase subunit I, chloroplastic.